A 245-amino-acid polypeptide reads, in one-letter code: Phycocyanobilin:ferredoxin oxidoreductase (245 aa).

It belongs to the HY2 family.

The enzyme catalyses (2R,3Z)-phycocyanobilin + 4 oxidized [2Fe-2S]-[ferredoxin] = biliverdin IXalpha + 4 reduced [2Fe-2S]-[ferredoxin] + 4 H(+). Catalyzes the four-electron reduction of biliverdin IX-alpha (2-electron reduction at both the A and D rings); the reaction proceeds via an isolatable 2-electron intermediate, 181,182-dihydrobiliverdin. The polypeptide is Phycocyanobilin:ferredoxin oxidoreductase (Trichormus variabilis (strain ATCC 29413 / PCC 7937) (Anabaena variabilis)).